Consider the following 153-residue polypeptide: Transcriptional repressor NrdR (153 aa).

The segment at 3–34 is a zinc-finger region; it reads CPSCFHNGTRVLDSRPVDEGRSIRRRRECESC. Positions 49 to 139 constitute an ATP-cone domain; that stretch reads LIVVKKEGTR…VYRQFKDLNV (91 aa).

It belongs to the NrdR family. Requires Zn(2+) as cofactor.

Its function is as follows. Negatively regulates transcription of bacterial ribonucleotide reductase nrd genes and operons by binding to NrdR-boxes. In Bacillus mycoides (strain KBAB4) (Bacillus weihenstephanensis), this protein is Transcriptional repressor NrdR.